The primary structure comprises 110 residues: Pathogenesis-related protein (110 aa).

An N-terminal signal peptide occupies residues 1 to 19; it reads AFLLAATLTISSHMQEAGA.

It belongs to the thaumatin family.

This is Pathogenesis-related protein from Juniperus virginiana (Eastern redcedar).